Here is a 466-residue protein sequence, read N- to C-terminus: Ras-GEF domain-containing family member 1C (466 aa).

Over residues 1–23 (MPQTLSASDMVTPGSLSPPTTEP) the composition is skewed to polar residues. Disordered regions lie at residues 1 to 35 (MPQTLSASDMVTPGSLSPPTTEPTDGEQAGQPLLD) and 443 to 466 (SESPENQTEKERWKSLRSSILGKT). Positions 34 to 164 (LDGAPSSASL…LLQALHQKLA (131 aa)) constitute an N-terminal Ras-GEF domain. The region spanning 200-446 (DPYTLAQQLT…YLASYESESP (247 aa)) is the Ras-GEF domain.

Functionally, guanine nucleotide exchange factor (GEF). The sequence is that of Ras-GEF domain-containing family member 1C (RASGEF1C) from Macaca fascicularis (Crab-eating macaque).